The primary structure comprises 187 residues: Ribosome-recycling factor (187 aa).

The protein belongs to the RRF family.

Its subcellular location is the cytoplasm. In terms of biological role, responsible for the release of ribosomes from messenger RNA at the termination of protein biosynthesis. May increase the efficiency of translation by recycling ribosomes from one round of translation to another. This chain is Ribosome-recycling factor, found in Petrotoga mobilis (strain DSM 10674 / SJ95).